Here is a 213-residue protein sequence, read N- to C-terminus: Skin granule protein (213 aa).

Residues 1-26 (METMYHRFLCIPFLLILGLAQGQSKG) form the signal peptide. A run of 3 repeats spans residues 27 to 48 (LQTV…IRTG), 49 to 70 (LQPI…IRTG), and 71 to 92 (LQPI…IRTG). A 4 X 22 AA approximate tandem repeats region spans residues 27-104 (LQTVTTFRTG…PIATFQTGVQ (78 aa)). The stretch at 93–104 (LQPIATFQTGVQ) is one 4; truncated repeat. Residues 162 to 213 (WHGGRNGHKMKKLGKKKHHKNRHGGKNHHKMKKIGKHHGGGRKFGKKHRHHK) form a disordered region. Positions 166–213 (RNGHKMKKLGKKKHHKNRHGGKNHHKMKKIGKHHGGGRKFGKKHRHHK) are enriched in basic residues.

It localises to the secreted. This is Skin granule protein (sgp) from Xenopus laevis (African clawed frog).